Here is a 549-residue protein sequence, read N- to C-terminus: MEVGIDFGTTFSTICFSPSGVSGCTPVAGSVYVETQIFIPEGSSTYLIGKAAGKAYRDGVEGRLYVNPKRWAGVTRDNVERYVEKLKPTYTVKIDSGGALLIGGLGSGPDTLLRVVDVICLFLRALILECERYTSTTVTAAVVTVPADYNSFKRSFVVEALKGLGIPVRGVVNEPTAAALYSLAKSRVEDLLLAVFDFGGGTFDVSFVKKKGNILCVIFSVGDNFLGGRDIDRAIVEVIKQKIKGKASDAKLGIFVSSMKEDLSNNNAITQHLIPVEGGVEVVDLTSDELDAIVAPFSARAVEVFKTGLDNFYPDPVIAVMTGGSSALVKVRSDVANLPQISKVVFDSTDFRCSVACGAKVYCDTLAGNSGLRLVDTLTNTLTDEVVGLQPVVIFPKGSPIPCSYTHRYTVGGGDVVYGIFEGENNRAFLNEPTFRGVSKRRGDPVETDVAQFNLSTDGTVSVIVNGEEVKNEYLVPGTTNVLDSLVYKSGREDLEAKAIPEYLTTLNILHDKAFTRRNLGNKDKGFSDLRIEENFLKSAVDTDTILNG.

Belongs to the heat shock protein 70 family.

It is found in the virion. Its function is as follows. Transports viral genome to neighboring plant cells directly through plasmosdesmata, without any budding. The movement protein allows efficient cell to cell propagation, by bypassing the host cell wall barrier. Two movement proteins, p6, Hsp70h and three structural proteins, CP, CPm, and P64 are essential for cell-cell movement. Also plays a role in virion formation. Together with CPm and p64, encapsidates the 5'-terminal portion of the viral genome. The sequence is that of Movement protein Hsp70h from Vitis vinifera (Grape).